Here is a 258-residue protein sequence, read N- to C-terminus: Type III pantothenate kinase (258 aa).

6–13 (DVGNTNTV) provides a ligand contact to ATP. Residues Y100 and 107–110 (GADR) each bind substrate. The active-site Proton acceptor is the D109. D129 contributes to the K(+) binding site. T132 serves as a coordination point for ATP. T184 contacts substrate.

It belongs to the type III pantothenate kinase family. As to quaternary structure, homodimer. The cofactor is NH4(+). K(+) serves as cofactor.

The protein resides in the cytoplasm. It catalyses the reaction (R)-pantothenate + ATP = (R)-4'-phosphopantothenate + ADP + H(+). The protein operates within cofactor biosynthesis; coenzyme A biosynthesis; CoA from (R)-pantothenate: step 1/5. Its function is as follows. Catalyzes the phosphorylation of pantothenate (Pan), the first step in CoA biosynthesis. This chain is Type III pantothenate kinase, found in Geobacillus sp. (strain WCH70).